The primary structure comprises 239 residues: Aspartate/glutamate leucyltransferase (239 aa).

It belongs to the R-transferase family. Bpt subfamily.

It localises to the cytoplasm. It carries out the reaction N-terminal L-glutamyl-[protein] + L-leucyl-tRNA(Leu) = N-terminal L-leucyl-L-glutamyl-[protein] + tRNA(Leu) + H(+). It catalyses the reaction N-terminal L-aspartyl-[protein] + L-leucyl-tRNA(Leu) = N-terminal L-leucyl-L-aspartyl-[protein] + tRNA(Leu) + H(+). Functionally, functions in the N-end rule pathway of protein degradation where it conjugates Leu from its aminoacyl-tRNA to the N-termini of proteins containing an N-terminal aspartate or glutamate. The chain is Aspartate/glutamate leucyltransferase from Alkalilimnicola ehrlichii (strain ATCC BAA-1101 / DSM 17681 / MLHE-1).